A 497-amino-acid polypeptide reads, in one-letter code: O-acetyltransferase PaAT-1 (497 aa).

Residue N35 is glycosylated (N-linked (GlcNAc...) asparagine). Transmembrane regions (helical) follow at residues G69–I89, L107–S127, L157–Y177, L241–F261, V278–I298, A329–F349, P375–F395, I406–G426, and V443–V463.

The protein belongs to the acyltransferase 3 family.

It localises to the membrane. The protein operates within mycotoxin biosynthesis. O-acetyltransferase; part of the 2 gene clusters that mediate the biosynthesis of fusicoccins, diterpene glucosides that display phytohormone-like activity and function as potent activators of plasma membrane H(+)-ATPases in plants by modifying 14-3-3 proteins and cause the plant disease constriction canker. The first step in the pathway is performed by the fusicoccadiene synthase PaFS that possesses both prenyl transferase and terpene cyclase activity, converting isopentenyl diphosphate and dimethylallyl diphosphate into geranylgeranyl diphosphate (GGDP) and successively converting GGDP into fusicocca-2,10(14)-diene, a precursor for fusicoccin H. The second step is the oxidation at the C-8 position by the cytochrome P450 monooxygenase PaP450-2 to yield fusicocca-2,10(14)-diene-8-beta-ol. The cytochrome P450 monooxygenase PaP450-1 then catalyzes the hydroxylation at the C-16 position to produce fusicocca-2,10(14)-diene-8-beta,16-diol. The dioxygenase fc-dox then catalyzes the 16-oxydation of fusicocca-2,10(14)-diene-8-beta,16-diol to yield an aldehyde (8-beta-hydroxyfusicocca-1,10(14)-dien-16-al). The short-chain dehydrogenase/reductase fc-sdr catalyzes the reduction of the aldehyde to yield fusicocca-1,10(14)-diene-8-beta,16-diol. The next step is the hydroxylation at C-9 performed by the cytochrome P450 monooxygenase PaP450-3 that leads to fusicoccin H aglycon which is glycosylated to fusicoccin H by the O-glycosyltransferase PaGT. Hydroxylation at C-12 by the cytochrome P450 monooxygenase PaP450-4 leads then to the production of fusicoccin Q and is followed by methylation by the O-methyltransferase PaMT to yield fusicoccin P. Fusicoccin P is further converted to fusicoccin J via prenylation by the O-glucose prenyltransferase PaPT. Cytochrome P450 monooxygenase PaP450-5 then performs hydroxylation at C-19 to yield dideacetyl-fusicoccin A which is acetylated to 3'-O-deacetyl-fusicoccin A by the O-acetyltransferase PaAT-2. Finally, a another acetylation by the O-acetyltransferase PaAT-1 yields fusicoccin A. The protein is O-acetyltransferase PaAT-1 of Phomopsis amygdali (Fusicoccum amygdali).